The chain runs to 556 residues: Formate--tetrahydrofolate ligase (556 aa).

Residue Thr65–Ser72 participates in ATP binding.

Belongs to the formate--tetrahydrofolate ligase family.

The enzyme catalyses (6S)-5,6,7,8-tetrahydrofolate + formate + ATP = (6R)-10-formyltetrahydrofolate + ADP + phosphate. Its pathway is one-carbon metabolism; tetrahydrofolate interconversion. The protein is Formate--tetrahydrofolate ligase of Streptococcus thermophilus (strain CNRZ 1066).